Consider the following 204-residue polypeptide: Holliday junction branch migration complex subunit RuvA (204 aa).

The interval 1–67 is domain I; sequence MIGYLEGKIL…QPKPVLIGFN (67 aa). Residues 68–145 are domain II; sequence SLEEREFFER…VFAGEHGGEP (78 aa). Positions 146 to 156 are flexible linker; sequence AGPAPVEENFH. The domain III stretch occupies residues 156–204; that stretch reads HLLVLDVLVNQLGHKAAEAKELINQAIKRNPAISSPEELFDEVYRGETG.

The protein belongs to the RuvA family. Homotetramer. Forms an RuvA(8)-RuvB(12)-Holliday junction (HJ) complex. HJ DNA is sandwiched between 2 RuvA tetramers; dsDNA enters through RuvA and exits via RuvB. An RuvB hexamer assembles on each DNA strand where it exits the tetramer. Each RuvB hexamer is contacted by two RuvA subunits (via domain III) on 2 adjacent RuvB subunits; this complex drives branch migration. In the full resolvosome a probable DNA-RuvA(4)-RuvB(12)-RuvC(2) complex forms which resolves the HJ.

It is found in the cytoplasm. Functionally, the RuvA-RuvB-RuvC complex processes Holliday junction (HJ) DNA during genetic recombination and DNA repair, while the RuvA-RuvB complex plays an important role in the rescue of blocked DNA replication forks via replication fork reversal (RFR). RuvA specifically binds to HJ cruciform DNA, conferring on it an open structure. The RuvB hexamer acts as an ATP-dependent pump, pulling dsDNA into and through the RuvAB complex. HJ branch migration allows RuvC to scan DNA until it finds its consensus sequence, where it cleaves and resolves the cruciform DNA. In Desulfatibacillum aliphaticivorans, this protein is Holliday junction branch migration complex subunit RuvA.